Reading from the N-terminus, the 179-residue chain is uncharacterized protein (179 aa).

4 helical membrane passes run 33 to 53 (HIIA…VILD), 63 to 83 (VMFI…MLVL), 89 to 109 (ITAS…FVLT), and 115 to 135 (FSPF…EYFF).

The protein resides in the cell membrane. This is an uncharacterized protein from Bacillus subtilis (strain 168).